We begin with the raw amino-acid sequence, 704 residues long: Polyribonucleotide nucleotidyltransferase (704 aa).

Asp487 and Asp493 together coordinate Mg(2+). Positions 554 to 613 constitute a KH domain; it reads PRLLTIKIHPDKIREVIGKGGSTIQAITKETGTQIDIQDDGTIIIASVNAIAAQAAKSRI. An S1 motif domain is found at 623 to 691; it reads GRIYEGKVAK…KQGRIRLSIK (69 aa).

The protein belongs to the polyribonucleotide nucleotidyltransferase family. As to quaternary structure, component of the RNA degradosome, which is a multiprotein complex involved in RNA processing and mRNA degradation. It depends on Mg(2+) as a cofactor.

It localises to the cytoplasm. The enzyme catalyses RNA(n+1) + phosphate = RNA(n) + a ribonucleoside 5'-diphosphate. Functionally, involved in mRNA degradation. Catalyzes the phosphorolysis of single-stranded polyribonucleotides processively in the 3'- to 5'-direction. The chain is Polyribonucleotide nucleotidyltransferase from Xanthomonas campestris pv. campestris (strain B100).